A 210-amino-acid polypeptide reads, in one-letter code: Chaperone protein TorD (210 aa).

This sequence belongs to the TorD/DmsD family. TorD subfamily.

The protein resides in the cytoplasm. Functionally, involved in the biogenesis of TorA. Acts on TorA before the insertion of the molybdenum cofactor and, as a result, probably favors a conformation of the apoenzyme that is competent for acquiring the cofactor. The sequence is that of Chaperone protein TorD from Salmonella newport (strain SL254).